The primary structure comprises 141 residues: MEPSHKDAETAAAAAAVAAADPRGASSSSGVVVQVREKKGPLRAAIPYMPFPVAVICLFLNTFVPGLGTFVSAFTVLCGARTDLPDRHVCCVFWLNIAAALIQILTAIVMVGWIMSIFWGMDMVILAISQGYKEQGIPQQL.

S26 is subject to Phosphoserine. 2 helical membrane passes run 51–71 (FPVAVICLFLNTFVPGLGTFV) and 87–107 (RHVCCVFWLNIAAALIQILTA).

This sequence belongs to the SPEC3 family. Stum subfamily.

It localises to the membrane. The polypeptide is Protein stum homolog (Homo sapiens (Human)).